The following is a 569-amino-acid chain: Mitogen-activated protein kinase 8 (569 aa).

Residues 13-304 (YKIQEVIGKG…AEEALADPYF (292 aa)) form the Protein kinase domain. Residues 19–27 (IGKGSYGVV) and Lys-42 contribute to the ATP site. Residue Asp-139 is the Proton acceptor of the active site. At Thr-175 the chain carries Phosphothreonine. Positions 175-177 (TDY) match the TXY motif. Tyr-177 bears the Phosphotyrosine mark. The disordered stretch occupies residues 404–432 (TTVHSAPIPPKDHQNITSQVPQRIPGRTG).

Belongs to the protein kinase superfamily. CMGC Ser/Thr protein kinase family. MAP kinase subfamily. Post-translationally, dually phosphorylated on Thr-175 and Tyr-177, which activates the enzyme. Expressed in leaves and panicles.

It carries out the reaction L-seryl-[protein] + ATP = O-phospho-L-seryl-[protein] + ADP + H(+). It catalyses the reaction L-threonyl-[protein] + ATP = O-phospho-L-threonyl-[protein] + ADP + H(+). Activated by threonine and tyrosine phosphorylation. In Oryza sativa subsp. japonica (Rice), this protein is Mitogen-activated protein kinase 8 (MPK8).